Here is a 134-residue protein sequence, read N- to C-terminus: Profilin-1 (134 aa).

A disulfide bridge links Cys-13 with Cys-118. The short motif at Ala-84 to Thr-100 is the Involved in PIP2 interaction element. Position 114 is a phosphothreonine (Thr-114).

It belongs to the profilin family. As to quaternary structure, occurs in many kinds of cells as a complex with monomeric actin in a 1:1 ratio. Post-translationally, phosphorylated by MAP kinases.

It is found in the cytoplasm. The protein resides in the cytoskeleton. Its function is as follows. Binds to actin and affects the structure of the cytoskeleton. At high concentrations, profilin prevents the polymerization of actin, whereas it enhances it at low concentrations. This chain is Profilin-1, found in Olea europaea (Common olive).